The primary structure comprises 353 residues: Methylthioribose-1-phosphate isomerase (353 aa).

Substrate is bound by residues 51-53 (RGA), arginine 94, and glutamine 199. The Proton donor role is filled by aspartate 240. Residue 250–251 (NK) coordinates substrate.

Belongs to the eIF-2B alpha/beta/delta subunits family. MtnA subfamily. As to quaternary structure, homodimer.

The catalysed reaction is 5-(methylsulfanyl)-alpha-D-ribose 1-phosphate = 5-(methylsulfanyl)-D-ribulose 1-phosphate. It participates in amino-acid biosynthesis; L-methionine biosynthesis via salvage pathway; L-methionine from S-methyl-5-thio-alpha-D-ribose 1-phosphate: step 1/6. Its function is as follows. Catalyzes the interconversion of methylthioribose-1-phosphate (MTR-1-P) into methylthioribulose-1-phosphate (MTRu-1-P). The sequence is that of Methylthioribose-1-phosphate isomerase from Bacillus pumilus (strain SAFR-032).